We begin with the raw amino-acid sequence, 198 residues long: Probable GTP-binding protein EngB (198 aa).

The EngB-type G domain occupies 22 to 195 (GHPEIAFLGR…WSWLEQTAGL (174 aa)). GTP is bound by residues 30 to 37 (GRSNVGKS), 57 to 61 (GKTQT), 75 to 78 (DVPG), 142 to 145 (TKID), and 174 to 176 (FSA). Mg(2+) contacts are provided by Ser37 and Thr59.

This sequence belongs to the TRAFAC class TrmE-Era-EngA-EngB-Septin-like GTPase superfamily. EngB GTPase family. Requires Mg(2+) as cofactor.

Functionally, necessary for normal cell division and for the maintenance of normal septation. In Lacticaseibacillus paracasei (strain ATCC 334 / BCRC 17002 / CCUG 31169 / CIP 107868 / KCTC 3260 / NRRL B-441) (Lactobacillus paracasei), this protein is Probable GTP-binding protein EngB.